Here is a 219-residue protein sequence, read N- to C-terminus: Interleukin-12 subunit alpha (219 aa).

Positions Met-1–Ala-22 are cleaved as a signal peptide. N-linked (GlcNAc...) asparagine glycosylation is found at Asn-24, Asn-93, and Asn-107. 3 disulfides stabilise this stretch: Cys-37–Cys-110, Cys-64–Cys-196, and Cys-85–Cys-123.

This sequence belongs to the IL-6 superfamily. As to quaternary structure, heterodimer with IL12B; disulfide-linked. This heterodimer is known as interleukin IL-12. Heterodimer with EBI3/IL27B; not disulfide-linked. This heterodimer is known as interleukin IL-35. Interacts with NBR1; this interaction promotes IL-12 secretion.

The protein resides in the secreted. Heterodimerizes with IL12B to form the IL-12 cytokine or with EBI3/IL27B to form the IL-35 cytokine. IL-12 is primarily produced by professional antigen-presenting cells (APCs) such as B-cells and dendritic cells (DCs) as well as macrophages and granulocytes and regulates T-cell and natural killer-cell responses, induces the production of interferon-gamma (IFN-gamma), favors the differentiation of T-helper 1 (Th1) cells and is an important link between innate resistance and adaptive immunity. Mechanistically, exerts its biological effects through a receptor composed of IL12R1 and IL12R2 subunits. Binding to the receptor results in the rapid tyrosine phosphorylation of a number of cellular substrates including the JAK family kinases TYK2 and JAK2. In turn, recruited STAT4 gets phosphorylated and translocates to the nucleus where it regulates cytokine/growth factor responsive genes. As part of IL-35, plays essential roles in maintaining the immune homeostasis of the liver microenvironment and also functions as an immune-suppressive cytokine. Mediates biological events through unconventional receptors composed of IL12RB2 and gp130/IL6ST heterodimers or homodimers. Signaling requires the transcription factors STAT1 and STAT4, which form a unique heterodimer that binds to distinct DNA sites. In Cercocebus atys (Sooty mangabey), this protein is Interleukin-12 subunit alpha (IL12A).